Reading from the N-terminus, the 109-residue chain is U4-lycotoxin-Ls1a (109 aa).

The first 22 residues, 1–22 (MKVLVLFSVLFLTLFSYSSTEA), serve as a signal peptide directing secretion. Positions 23–44 (IDEFDSDAEEDMLSLMANEQVR) are excised as a propeptide. A knottin domain region spans residues 45–88 (AKACTPRLHDCSHDRHSCCRGELFKDVCYCFYPEGEDKTEVCSC). Cystine bridges form between C48/C63, C55/C72, C62/C88, and C74/C86. The tract at residues 89–108 (QQPKSHKYIEKVVDKAKTVV) is linear cationic cytotoxin domain.

This sequence belongs to the neurotoxin 19 (CSTX) family. 05 (U4-Lctx) subfamily. Expressed by the venom gland.

Its subcellular location is the secreted. In terms of biological role, enhances the high-affinity desensitization of human P2RX3 purinoceptors. The sequence is that of U4-lycotoxin-Ls1a from Lycosa singoriensis (Wolf spider).